The following is a 544-amino-acid chain: Probable protein kinase UbiB (544 aa).

The chain crosses the membrane as a helical span at residues 1–21 (MIFGELRRLYLIIGVMLSYGL). The Protein kinase domain occupies 123–500 (DFQQEPLASA…HVRQSQSRFL (378 aa)). Residues 129-137 (LASASIAQV) and Lys-151 each bind ATP. Residue Asp-286 is the Proton acceptor of the active site. The next 2 helical transmembrane spans lie at 499-519 (FLFG…TQGA) and 520-540 (DEGS…IIGW).

The protein belongs to the ABC1 family. UbiB subfamily.

It localises to the cell inner membrane. Its pathway is cofactor biosynthesis; ubiquinone biosynthesis [regulation]. Its function is as follows. Is probably a protein kinase regulator of UbiI activity which is involved in aerobic coenzyme Q (ubiquinone) biosynthesis. This chain is Probable protein kinase UbiB, found in Sodalis glossinidius (strain morsitans).